Reading from the N-terminus, the 399-residue chain is Acetate kinase 2 (399 aa).

A Mg(2+)-binding site is contributed by Asn10. Lys17 is an ATP binding site. Arg89 is a substrate binding site. The Proton donor/acceptor role is filled by Asp146. ATP-binding positions include 206–210, 281–283, and 329–333; these read HLGNG, DCR, and GIGEN. Glu384 contributes to the Mg(2+) binding site.

It belongs to the acetokinase family. In terms of assembly, homodimer. Requires Mg(2+) as cofactor. Mn(2+) serves as cofactor.

Its subcellular location is the cytoplasm. The catalysed reaction is acetate + ATP = acetyl phosphate + ADP. Its pathway is metabolic intermediate biosynthesis; acetyl-CoA biosynthesis; acetyl-CoA from acetate: step 1/2. In terms of biological role, catalyzes the formation of acetyl phosphate from acetate and ATP. Can also catalyze the reverse reaction. The chain is Acetate kinase 2 from Neisseria meningitidis serogroup A / serotype 4A (strain DSM 15465 / Z2491).